Consider the following 391-residue polypeptide: Phosphoglycerate kinase (391 aa).

Residues 21 to 23, R36, 59 to 62, R113, and R146 contribute to the substrate site; these read DLN and HLGR. Residues K197, E319, and 345 to 348 contribute to the ATP site; that span reads GGDT.

It belongs to the phosphoglycerate kinase family. As to quaternary structure, monomer.

Its subcellular location is the cytoplasm. The enzyme catalyses (2R)-3-phosphoglycerate + ATP = (2R)-3-phospho-glyceroyl phosphate + ADP. The protein operates within carbohydrate degradation; glycolysis; pyruvate from D-glyceraldehyde 3-phosphate: step 2/5. The protein is Phosphoglycerate kinase of Shewanella halifaxensis (strain HAW-EB4).